A 529-amino-acid chain; its full sequence is N5-hydroxyornithine acetylase sidL (529 aa).

2 disordered regions span residues 59 to 95 (ASVN…VRPF) and 239 to 258 (SPWP…SPVA). H462 is a substrate binding site. The active-site Proton acceptor is E498.

Belongs to the lysine N-acyltransferase mbtK family.

The protein localises to the cytoplasm. It is found in the cytosol. It participates in siderophore biosynthesis. Acyltransferase; part of the gene cluster that mediates the biosynthesis of at least 11 siderophores, including beauverichelin A, dimerumic acid (DA), Na-dimethyl coprogen (NADC), eleutherazine B, ferricrocin (FC), fusarinine A, fusarinine C (FsC), metachelin A, mevalonolactone, rhodotorulic acid (RA) and tenellin. This cocktail of siderophores for iron metabolism is essential for virulence, and more specifically for the fungal virulence in penetrating through the host cuticle. Siderophore synthesis is also involved in conidial germination under iron-deficient conditions. SIDL contributes to partial production of ferricrocin under iron-limiting conditions via the acetylation of N(5)-hydroxyornithine. The chain is N5-hydroxyornithine acetylase sidL from Beauveria bassiana (strain ARSEF 2860) (White muscardine disease fungus).